The chain runs to 611 residues: uncharacterized protein (611 aa).

In terms of domain architecture, SAC spans 51–351 (LYGFIRLKIY…DYHKQGSRNL (301 aa)).

To yeast RSD1 and S.pombe SpBC19F5.03.

This is an uncharacterized protein from Schizosaccharomyces pombe (strain 972 / ATCC 24843) (Fission yeast).